The following is a 522-amino-acid chain: MAKENGFIGSIDQGTTSTRFIIYDHDARPVASHQVEFTQFYPEAGWVEHDPMEILESVKVCIAKALDKATADGHNVDGGLKAIGLTDQRETTVVWSKSTGLPLHKAIVWMDARTSSICRRLEKELSGGRSHFVESCGLPISTYFSAMKLLWLMENVDDVKDAIKKGDAIFGTIDTWLIWNMTGGINGGLHVTDVTNASRTMLMNLKTLSWDQDTLKTLGIPAEILPKIVSNSEVIGEICKGWPIPGIKIAGCLGDQHAAMLGQACRKGEAKSTYGTGAFILLNTGEVPIKSGHGLLTTLAYKLGPQAQTNYALEGSIAIAGAAVQWLRDSLGIIKSASEIEDLAAMVDSTGGVYFVPAFNGLFAPWWREDARGVCIGITRFTNKSHIARAVLESMCFQVKDVLDSMNKDAGEKGSLNNGKGEFLLRVDGGATANNLLMQIQADLMGSPVVRPVDIETTALGAAYAAGLAVGFWKEADIFESGEKAKNSKVFRPAMEEGIRKKKVASWCKAVERTFDLADLSI.

Position 15 (Thr-15) interacts with substrate. Arg-19 contacts ATP. Substrate-binding positions include 89–90 (RE), Tyr-143, and 255–256 (DQ). ATP contacts are provided by residues Thr-276, Gly-321, and 430 to 434 (GATAN).

This sequence belongs to the FGGY kinase family. Highly expressed in germinating seeds and senescent leaves, and at lower levels in roots, leaves, flowers and siliques.

The protein resides in the cytoplasm. It is found in the cytosol. It carries out the reaction glycerol + ATP = sn-glycerol 3-phosphate + ADP + H(+). It functions in the pathway polyol metabolism; glycerol degradation via glycerol kinase pathway; sn-glycerol 3-phosphate from glycerol: step 1/1. Functionally, key enzyme in the regulation of glycerol uptake and metabolism. Required for resistance to nonhost Pseudomonas bacteria and to the pathogenic fungus B.cinerea. The polypeptide is Glycerol kinase (GLPK) (Arabidopsis thaliana (Mouse-ear cress)).